A 579-amino-acid chain; its full sequence is ATP-dependent RNA helicase SUV3, mitochondrial (579 aa).

A mitochondrion-targeting transit peptide spans Met1 to Asp59. Residues Asn72–Val213 enclose the Helicase ATP-binding domain. Gly85–Thr92 serves as a coordination point for ATP. The region spanning Val214–Ser388 is the Helicase C-terminal domain. Asn309 carries an N-linked (GlcNAc...) asparagine glycan.

The protein belongs to the helicase family. In terms of assembly, homodimer; in free form. Component of the mitochondrial degradosome (mtEXO) complex which is a heteropentamer containing 2 copies of SUPV3L1 and 3 copies of PNPT1. Mg(2+) serves as cofactor. The cofactor is Mn(2+).

The protein resides in the nucleus. It is found in the mitochondrion matrix. The protein localises to the mitochondrion nucleoid. The enzyme catalyses ATP + H2O = ADP + phosphate + H(+). Its function is as follows. Major helicase player in mitochondrial RNA metabolism. Component of the mitochondrial degradosome (mtEXO) complex, that degrades 3' overhang double-stranded RNA with a 3'-to-5' directionality in an ATP-dependent manner. ATPase and ATP-dependent multisubstrate helicase, able to unwind double-stranded (ds) DNA and RNA, and RNA/DNA heteroduplexes in the 5'-to-3' direction. Plays a role in the RNA surveillance system in mitochondria; regulates the stability of mature mRNAs, the removal of aberrantly formed mRNAs and the rapid degradation of non coding processing intermediates. Confers salinity and drought stress tolerances by maintaining both photosynthesis and antioxidant machinery, probably via an increase in plant hormones levels such as gibberellic acid (GA(3)), the cytokinin zeatin (Z) and indole-3-acetic acid (IAA). The chain is ATP-dependent RNA helicase SUV3, mitochondrial from Oryza sativa subsp. japonica (Rice).